A 1083-amino-acid polypeptide reads, in one-letter code: Carbamoyl phosphate synthase large chain (1083 aa).

Positions 1-402 (MPKRTDIRKV…AYMKALRSME (402 aa)) are carboxyphosphate synthetic domain. Positions 129, 169, 175, 176, 208, 210, 215, 241, 242, 243, 285, and 299 each coordinate ATP. The 196-residue stretch at 133–328 (KAAMQKIGVA…IAKIAAKLAL (196 aa)) folds into the ATP-grasp 1 domain. Residues Gln285, Glu299, and Asn301 each contribute to the Mg(2+) site. Positions 285, 299, and 301 each coordinate Mn(2+). Residues 403 to 554 (LGRVGLESPE…YSTYEEEDEA (152 aa)) form an oligomerization domain region. The carbamoyl phosphate synthetic domain stretch occupies residues 555-937 (PPTDRQKVLI…AFAKSQLAAG (383 aa)). The region spanning 679 to 871 (AALIEKLGLK…MAKIAALCMV (193 aa)) is the ATP-grasp 2 domain. Arg715, Arg754, Leu756, Glu761, Gly787, Val788, His789, Ser790, Gln830, and Glu842 together coordinate ATP. Mg(2+)-binding residues include Gln830, Glu842, and Asn844. Gln830, Glu842, and Asn844 together coordinate Mn(2+). Residues 938-1078 (VKLPKSGKVF…QEYLGINAAP (141 aa)) form the MGS-like domain. An allosteric domain region spans residues 938-1083 (VKLPKSGKVF…INAAPPGTRR (146 aa)).

It belongs to the CarB family. As to quaternary structure, composed of two chains; the small (or glutamine) chain promotes the hydrolysis of glutamine to ammonia, which is used by the large (or ammonia) chain to synthesize carbamoyl phosphate. Tetramer of heterodimers (alpha,beta)4. Requires Mg(2+) as cofactor. It depends on Mn(2+) as a cofactor.

The catalysed reaction is hydrogencarbonate + L-glutamine + 2 ATP + H2O = carbamoyl phosphate + L-glutamate + 2 ADP + phosphate + 2 H(+). The enzyme catalyses hydrogencarbonate + NH4(+) + 2 ATP = carbamoyl phosphate + 2 ADP + phosphate + 2 H(+). It participates in amino-acid biosynthesis; L-arginine biosynthesis; carbamoyl phosphate from bicarbonate: step 1/1. It functions in the pathway pyrimidine metabolism; UMP biosynthesis via de novo pathway; (S)-dihydroorotate from bicarbonate: step 1/3. Functionally, large subunit of the glutamine-dependent carbamoyl phosphate synthetase (CPSase). CPSase catalyzes the formation of carbamoyl phosphate from the ammonia moiety of glutamine, carbonate, and phosphate donated by ATP, constituting the first step of 2 biosynthetic pathways, one leading to arginine and/or urea and the other to pyrimidine nucleotides. The large subunit (synthetase) binds the substrates ammonia (free or transferred from glutamine from the small subunit), hydrogencarbonate and ATP and carries out an ATP-coupled ligase reaction, activating hydrogencarbonate by forming carboxy phosphate which reacts with ammonia to form carbamoyl phosphate. The sequence is that of Carbamoyl phosphate synthase large chain from Myxococcus xanthus (strain DK1622).